The primary structure comprises 1138 residues: uncharacterized protein (1138 aa).

2 disordered regions span residues 985–1015 (EKKL…MAQE) and 1094–1138 (LVAT…QNKL). Positions 1110–1138 (DDDEYEKYDSGIEDIETDVDEEEEVQNKL) are enriched in acidic residues.

This is an uncharacterized protein from Ostreid herpesvirus 1 (isolate France) (OsHV-1).